Here is a 484-residue protein sequence, read N- to C-terminus: tRNA sulfurtransferase (484 aa).

Residues 63–167 form the THUMP domain; that stretch reads REMIERLTCT…LDRLFVIHRQ (105 aa). Residues 185 to 186, Lys-267, Gly-289, and Gln-298 each bind ATP; that span reads LM. An intrachain disulfide couples Cys-346 to Cys-457. Residues 405–483 enclose the Rhodanese domain; it reads VLPGQIVIDI…GHTNVRVYRP (79 aa). The active-site Cysteine persulfide intermediate is the Cys-457.

Belongs to the ThiI family.

The protein localises to the cytoplasm. It carries out the reaction [ThiI sulfur-carrier protein]-S-sulfanyl-L-cysteine + a uridine in tRNA + 2 reduced [2Fe-2S]-[ferredoxin] + ATP + H(+) = [ThiI sulfur-carrier protein]-L-cysteine + a 4-thiouridine in tRNA + 2 oxidized [2Fe-2S]-[ferredoxin] + AMP + diphosphate. The enzyme catalyses [ThiS sulfur-carrier protein]-C-terminal Gly-Gly-AMP + S-sulfanyl-L-cysteinyl-[cysteine desulfurase] + AH2 = [ThiS sulfur-carrier protein]-C-terminal-Gly-aminoethanethioate + L-cysteinyl-[cysteine desulfurase] + A + AMP + 2 H(+). It participates in cofactor biosynthesis; thiamine diphosphate biosynthesis. Its function is as follows. Catalyzes the ATP-dependent transfer of a sulfur to tRNA to produce 4-thiouridine in position 8 of tRNAs, which functions as a near-UV photosensor. Also catalyzes the transfer of sulfur to the sulfur carrier protein ThiS, forming ThiS-thiocarboxylate. This is a step in the synthesis of thiazole, in the thiamine biosynthesis pathway. The sulfur is donated as persulfide by IscS. This Pseudomonas aeruginosa (strain UCBPP-PA14) protein is tRNA sulfurtransferase.